Consider the following 808-residue polypeptide: Phosphoinositide phosphatase SAC2 (808 aa).

The SAC domain maps to 158–551; the sequence is LCTVDLTKDF…GDTLALQYGG (394 aa). The segment at 429–476 is disordered; that stretch reads FQNQNPSTLENDDGECSTYDPPSKDETAPNLVVENGNDSKDAKEDQQK. Residues 465 to 476 show a composition bias toward basic and acidic residues; that stretch reads NDSKDAKEDQQK. Positions 487-498 match the Phosphatase catalytic core motif; it reads RTNCIDCLDRTN.

Component of the PI(3,5)P2 regulatory complex at least composed of ATG18, SAC/FIG4, FAB1 and VAC14. Requires Mg(2+) as cofactor. Ubiquitous with a higher level of expression in young seedlings than in other tissues.

The protein localises to the vacuole membrane. The catalysed reaction is a 1,2-diacyl-sn-glycero-3-phospho-(1D-myo-inositol-3,5-bisphosphate) + H2O = a 1,2-diacyl-sn-glycero-3-phospho-(1D-myo-inositol-3-phosphate) + phosphate. Functionally, the PI(3,5)P2 regulatory complex regulates both the synthesis and turnover of phosphatidylinositol 3,5-bisphosphate (PtdIns(3,5)P2). This is Phosphoinositide phosphatase SAC2 (SAC2) from Arabidopsis thaliana (Mouse-ear cress).